Here is a 320-residue protein sequence, read N- to C-terminus: Short-chain dehydrogenase TIC 32 B, chloroplastic (320 aa).

NADP(+)-binding positions include 40–46, 92–93, N119, and T140; these read GGTSGIG and DL. S174 contacts substrate. Y196 (proton acceptor) is an active-site residue. Residues 301–317 form an interaction with calmodulin region; the sequence is DTTLADKLWDFSIKLVD.

Belongs to the short-chain dehydrogenases/reductases (SDR) family. In terms of assembly, part of the Tic complex.

It is found in the plastid. It localises to the chloroplast inner membrane. In terms of biological role, involved in protein precursor import into chloroplasts. This chain is Short-chain dehydrogenase TIC 32 B, chloroplastic, found in Brassica napus (Rape).